Here is a 174-residue protein sequence, read N- to C-terminus: NADH-ubiquinone oxidoreductase chain 6 (174 aa).

Helical transmembrane passes span 24–44, 53–73, 82–102, and 143–163; these read LALGLTLLIQTIFVCLLTGLM, ILFLIFLGGMLVLFIYVTSLA, MKLTLFSSLILIFMLILSFIM, and FITILLMNYLLITLIVIVKIT.

The protein belongs to the complex I subunit 6 family.

The protein localises to the mitochondrion membrane. It catalyses the reaction a ubiquinone + NADH + 5 H(+)(in) = a ubiquinol + NAD(+) + 4 H(+)(out). Its function is as follows. Core subunit of the mitochondrial membrane respiratory chain NADH dehydrogenase (Complex I) that is believed to belong to the minimal assembly required for catalysis. Complex I functions in the transfer of electrons from NADH to the respiratory chain. The immediate electron acceptor for the enzyme is believed to be ubiquinone. This Drosophila melanogaster (Fruit fly) protein is NADH-ubiquinone oxidoreductase chain 6 (mt:ND6).